A 126-amino-acid chain; its full sequence is MYWSILAVGIGGALGSLFRWFLGIRLNGLFSGLPLGTFAANVIAGYVIGVAVAGFARAPQIAPEWRLFVITGLMGGLSTFSTFSAEVVQRLQDGRLGWAAGEIVIHVGASLVMTILGIATVSLLSR.

Helical transmembrane passes span 4 to 24, 35 to 55, 68 to 88, and 103 to 123; these read SILA…FLGI, LGTF…VAGF, FVIT…AEVV, and IVIH…TVSL. Na(+) contacts are provided by G75 and S78.

The protein belongs to the fluoride channel Fluc/FEX (TC 1.A.43) family.

It is found in the cell inner membrane. The catalysed reaction is fluoride(in) = fluoride(out). Na(+) is not transported, but it plays an essential structural role and its presence is essential for fluoride channel function. Fluoride-specific ion channel. Important for reducing fluoride concentration in the cell, thus reducing its toxicity. The sequence is that of Fluoride-specific ion channel FluC from Paraburkholderia xenovorans (strain LB400).